The following is a 238-amino-acid chain: Ribonuclease PH (238 aa).

Phosphate contacts are provided by residues R86 and 124–126 (GTR).

The protein belongs to the RNase PH family. In terms of assembly, homohexameric ring arranged as a trimer of dimers.

The catalysed reaction is tRNA(n+1) + phosphate = tRNA(n) + a ribonucleoside 5'-diphosphate. In terms of biological role, phosphorolytic 3'-5' exoribonuclease that plays an important role in tRNA 3'-end maturation. Removes nucleotide residues following the 3'-CCA terminus of tRNAs; can also add nucleotides to the ends of RNA molecules by using nucleoside diphosphates as substrates, but this may not be physiologically important. Probably plays a role in initiation of 16S rRNA degradation (leading to ribosome degradation) during starvation. This is Ribonuclease PH from Aliivibrio salmonicida (strain LFI1238) (Vibrio salmonicida (strain LFI1238)).